Reading from the N-terminus, the 428-residue chain is U2 small nuclear ribonucleoprotein auxiliary factor 35 kDa subunit-related protein 2-like (428 aa).

The segment at 1-51 is disordered; that stretch reads MASRQTAIPEKLSRKQYKAAMKKEKRKKRRQKMARLRALEAPPEEDDDVSA. Residues 23 to 35 are compositionally biased toward basic residues; that stretch reads KEKRKKRRQKMAR. Positions 42–51 are enriched in acidic residues; it reads PPEEDDDVSA. Residue S50 is modified to Phosphoserine. The segment at 157–185 adopts a C3H1-type 1 zinc-finger fold; sequence EKYRPSCPFYNKTGACRFGNRCSRKHDFP. The RRM domain occupies 189-295; it reads PTLLVKSMFT…RQLQCEFCPV (107 aa). The C3H1-type 2 zinc-finger motif lies at 297 to 324; that stretch reads RWKVAICGLFEMQKCPKGKHCNFLHVFR. The segment at 339 to 428 is disordered; the sequence is MSPPAWTGSS…PGPQSQSHRT (90 aa). S340 is subject to Phosphoserine. A compositionally biased stretch (basic and acidic residues) spans 351 to 366; sequence NSDRRERKDHHEEYYS. The segment covering 367–377 has biased composition (low complexity); that stretch reads KSRSYHSGSYH. S375 is subject to Phosphoserine. Residues 389–410 show a composition bias toward basic residues; it reads SPHRWKKSHKQTTKSHERHSSR. Over residues 419 to 428 the composition is skewed to polar residues; sequence PGPQSQSHRT.

As to quaternary structure, interacts with SF3B1. Interacts with ZCRB1. As to expression, highest expression levels are detected in the brain, and lower expression levels in other tissues like epididymis, testis, bone marrow or muscle. In testis, expressed in both Sertoli and spermatogenic cell.

The protein localises to the nucleus. Plays a role in splicing of the U12-type introns. Implicated also in removal of U2 introns positioned adjacent to a U12 intron. This is U2 small nuclear ribonucleoprotein auxiliary factor 35 kDa subunit-related protein 2-like from Mus musculus (Mouse).